The chain runs to 169 residues: 3-hydroxyacyl-[acyl-carrier-protein] dehydratase FabZ (169 aa).

Histidine 74 is a catalytic residue.

This sequence belongs to the thioester dehydratase family. FabZ subfamily.

It localises to the cytoplasm. The catalysed reaction is a (3R)-hydroxyacyl-[ACP] = a (2E)-enoyl-[ACP] + H2O. Involved in unsaturated fatty acids biosynthesis. Catalyzes the dehydration of short chain beta-hydroxyacyl-ACPs and long chain saturated and unsaturated beta-hydroxyacyl-ACPs. This is 3-hydroxyacyl-[acyl-carrier-protein] dehydratase FabZ from Gluconobacter oxydans (strain 621H) (Gluconobacter suboxydans).